Consider the following 297-residue polypeptide: Urease accessory protein UreD (297 aa).

The disordered stretch occupies residues 1-41; it reads MPQAADIATAPQRPSAPGDVVAAGQPPRARGRAHVSSKRRD.

The protein belongs to the UreD family. As to quaternary structure, ureD, UreF and UreG form a complex that acts as a GTP-hydrolysis-dependent molecular chaperone, activating the urease apoprotein by helping to assemble the nickel containing metallocenter of UreC. The UreE protein probably delivers the nickel.

Its subcellular location is the cytoplasm. Functionally, required for maturation of urease via the functional incorporation of the urease nickel metallocenter. This Ruegeria sp. (strain TM1040) (Silicibacter sp.) protein is Urease accessory protein UreD.